The sequence spans 256 residues: Glucanase inhibitor protein 2 (256 aa).

The signal sequence occupies residues 1–15 (MKLISTIAAATTAFG). The Peptidase S1 domain maps to 27–254 (IFGGGIIPSG…ATEWINSVTK (228 aa)). Cysteine 54 and cysteine 70 are disulfide-bonded. 4 N-linked (GlcNAc...) asparagine glycosylation sites follow: asparagine 87, asparagine 102, asparagine 107, and asparagine 157. 2 disulfide bridges follow: cysteine 177–cysteine 189 and cysteine 199–cysteine 230.

It belongs to the peptidase S1 family. As to quaternary structure, forms an apoplastic complex with host endoglucanases in tomato leaves during P.infestans infection.

It is found in the secreted. In terms of biological role, secreted effector that suppresses host plant glucan elicitor-mediated defense responses. Targets host endoglucanases and inhibits the endoglucanase-mediated release of elicitor-active glucan oligosaccharides from P.infestans cell walls. The sequence is that of Glucanase inhibitor protein 2 from Phytophthora infestans (Potato late blight agent).